A 185-amino-acid polypeptide reads, in one-letter code: dCTP deaminase (185 aa).

Residues 107 to 112, 131 to 133, glutamine 152, tyrosine 166, and glutamine 176 each bind dCTP; these read KSTYAR and TLE. Glutamate 133 acts as the Proton donor/acceptor in catalysis.

Belongs to the dCTP deaminase family. In terms of assembly, homotrimer.

The enzyme catalyses dCTP + H2O + H(+) = dUTP + NH4(+). It functions in the pathway pyrimidine metabolism; dUMP biosynthesis; dUMP from dCTP (dUTP route): step 1/2. In terms of biological role, catalyzes the deamination of dCTP to dUTP. The polypeptide is dCTP deaminase (Anaplasma marginale (strain Florida)).